The sequence spans 131 residues: Large ribosomal subunit protein bL17 (131 aa).

This sequence belongs to the bacterial ribosomal protein bL17 family. As to quaternary structure, part of the 50S ribosomal subunit. Contacts protein L32.

The protein is Large ribosomal subunit protein bL17 of Cupriavidus pinatubonensis (strain JMP 134 / LMG 1197) (Cupriavidus necator (strain JMP 134)).